The chain runs to 252 residues: Isoprenyl transferase (252 aa).

D32 is a catalytic residue. D32 lines the Mg(2+) pocket. Residues 33 to 36, W37, R45, H49, and 77 to 79 contribute to the substrate site; these read GNGR and STE. N80 (proton acceptor) is an active-site residue. Substrate is bound by residues W81, R83, R200, and 206-208; that span reads RLS. E219 is a Mg(2+) binding site.

This sequence belongs to the UPP synthase family. Homodimer. Mg(2+) serves as cofactor.

Its function is as follows. Catalyzes the condensation of isopentenyl diphosphate (IPP) with allylic pyrophosphates generating different type of terpenoids. This chain is Isoprenyl transferase, found in Listeria monocytogenes serovar 1/2a (strain ATCC BAA-679 / EGD-e).